A 136-amino-acid chain; its full sequence is uncharacterized protein (136 aa).

4 helical membrane-spanning segments follow: residues 10 to 32 (SAGIAFFVFIISAIILPGFFIWI), 44 to 66 (LRCGMANFAAVVITAVVAFILHF), 70 to 89 (VLLLPLLAFLIYLYVLKTLL), and 102 to 124 (IAGVVIFLLAVILLLIFGVWLLF).

The protein resides in the cell membrane. This is an uncharacterized protein from Archaeoglobus fulgidus (strain ATCC 49558 / DSM 4304 / JCM 9628 / NBRC 100126 / VC-16).